A 227-amino-acid polypeptide reads, in one-letter code: tRNA (guanine-N(1)-)-methyltransferase (227 aa).

S-adenosyl-L-methionine-binding positions include Gly112 and 132–137; that span reads IGDFIL.

It belongs to the RNA methyltransferase TrmD family. Homodimer.

The protein resides in the cytoplasm. The enzyme catalyses guanosine(37) in tRNA + S-adenosyl-L-methionine = N(1)-methylguanosine(37) in tRNA + S-adenosyl-L-homocysteine + H(+). Its function is as follows. Specifically methylates guanosine-37 in various tRNAs. In Sulfurovum sp. (strain NBC37-1), this protein is tRNA (guanine-N(1)-)-methyltransferase.